Consider the following 247-residue polypeptide: Complement C1q subcomponent subunit A (247 aa).

A signal peptide spans 1–24 (MEAPRGWLVIMISVLAVSLASSAA). The tract at residues 26-116 (DTCRDLDGRD…NPGNIKDQRR (91 aa)) is disordered. Residues 27-38 (TCRDLDGRDGAA) are compositionally biased toward basic and acidic residues. The 79-residue stretch at 33–111 (GRDGAARKPG…KGIKGNPGNI (79 aa)) folds into the Collagen-like domain. A 4-hydroxyproline mark is found at proline 41 and proline 47. A 5-hydroxylysine modification is found at lysine 50. Lysine 50 carries an O-linked (Gal...) hydroxylysine glycan. 4-hydroxyproline is present on residues proline 56 and proline 59. Lysine 69 is subject to 5-hydroxylysine. An O-linked (Gal...) hydroxylysine glycan is attached at lysine 69. 4-hydroxyproline occurs at positions 81 and 87. Over residues 98–109 (LPGLKGIKGNPG) the composition is skewed to low complexity. Lysine 102 carries the 5-hydroxylysine modification. An O-linked (Gal...) hydroxylysine glycan is attached at lysine 102. Residues 112-247 (KDQRRPAFSA…FSGFLIFPST (136 aa)) enclose the C1q domain. Cysteine 174 and cysteine 192 are oxidised to a cystine. Residue glutamine 201 coordinates Ca(2+).

Core component of the complement C1 complex, a calcium-dependent complex composed of 1 molecule of the C1Q subcomplex, 2 molecules of C1R and 2 molecules of C1S. The C1Q subcomplex is composed 18 subunits: 3 chains of C1QA, C1QB, and C1QC trimerize to form 6 collagen-like triple helices connected to six globular ligand-recognition modules (C1q domain). Interacts with CR1 (via Sushi 24 and Sushi 25 domains). Interacts (via C-terminus) with CD33; this interaction activates CD33 inhibitory motifs. In terms of processing, O-linked glycans are assumed to be the Glc-Gal disaccharides typically found as secondary modifications of hydroxylated lysines in collagen-like domains.

Its subcellular location is the secreted. It is found in the cell surface. The C1Q subcomplex is inhibited by sulfated molecules, such as triterpenoid sulfates, heparan sulfate, or chondroitin sulfates. Its function is as follows. Core component of the complement C1 complex, a multiprotein complex that initiates the classical pathway of the complement system, a cascade of proteins that leads to phagocytosis and breakdown of pathogens and signaling that strengthens the adaptive immune system. The classical complement pathway is initiated by the C1Q subcomplex of the C1 complex, which specifically binds IgG or IgM immunoglobulins complexed with antigens, forming antigen-antibody complexes on the surface of pathogens: C1QA, together with C1QB and C1QC, specifically recognizes and binds the Fc regions of IgG or IgM via its C1q domain. Immunoglobulin-binding activates the proenzyme C1R, which cleaves C1S, initiating the proteolytic cascade of the complement system. The C1Q subcomplex is activated by a hexamer of IgG complexed with antigens, while it is activated by a pentameric IgM. The C1Q subcomplex also recognizes and binds phosphatidylserine exposed on the surface of cells undergoing programmed cell death, possibly promoting activation of the complement system. The protein is Complement C1q subcomponent subunit A (C1QA) of Sus scrofa (Pig).